Consider the following 208-residue polypeptide: Cytochrome c biogenesis ATP-binding export protein CcmA (208 aa).

The 205-residue stretch at 2–206 (LEAKELTCAR…IRLTAEGRDE (205 aa)) folds into the ABC transporter domain. Residue 34–41 (GPNGAGKT) participates in ATP binding.

It belongs to the ABC transporter superfamily. CcmA exporter (TC 3.A.1.107) family. As to quaternary structure, the complex is composed of two ATP-binding proteins (CcmA) and two transmembrane proteins (CcmB).

Its subcellular location is the cell inner membrane. It carries out the reaction heme b(in) + ATP + H2O = heme b(out) + ADP + phosphate + H(+). Its function is as follows. Part of the ABC transporter complex CcmAB involved in the biogenesis of c-type cytochromes; once thought to export heme, this seems not to be the case, but its exact role is uncertain. Responsible for energy coupling to the transport system. This chain is Cytochrome c biogenesis ATP-binding export protein CcmA, found in Tatumella citrea (Pantoea citrea).